We begin with the raw amino-acid sequence, 556 residues long: Urocanate hydratase (556 aa).

NAD(+) is bound by residues 52–53 (GG), Q130, 176–178 (GMG), E196, R201, 243–244 (NA), 264–268 (QTSAH), 274–275 (YL), and Y323. C411 is an active-site residue. G493 contacts NAD(+).

This sequence belongs to the urocanase family. NAD(+) serves as cofactor.

It is found in the cytoplasm. The enzyme catalyses 4-imidazolone-5-propanoate = trans-urocanate + H2O. The protein operates within amino-acid degradation; L-histidine degradation into L-glutamate; N-formimidoyl-L-glutamate from L-histidine: step 2/3. Catalyzes the conversion of urocanate to 4-imidazolone-5-propionate. This chain is Urocanate hydratase, found in Rhodospirillum rubrum (strain ATCC 11170 / ATH 1.1.1 / DSM 467 / LMG 4362 / NCIMB 8255 / S1).